Reading from the N-terminus, the 183-residue chain is Inner membrane-spanning protein YciB (183 aa).

The next 5 helical transmembrane spans lie at 19-39, 53-73, 76-96, 121-141, and 151-171; these read LYGV…QLIV, IMGI…DLNF, WKVT…QFVF, LGWA…SYYF, and TFGF…YLYP.

It belongs to the YciB family.

The protein localises to the cell inner membrane. In terms of biological role, plays a role in cell envelope biogenesis, maintenance of cell envelope integrity and membrane homeostasis. This Actinobacillus pleuropneumoniae serotype 5b (strain L20) protein is Inner membrane-spanning protein YciB.